A 148-amino-acid chain; its full sequence is Large ribosomal subunit protein cL37 (148 aa).

The N-terminal 65 residues, 1-65, are a transit peptide targeting the chloroplast; it reads MALLCFNSLP…SSHGRIVVKA (65 aa). N-acetylalanine is present on Ala66. The disordered stretch occupies residues 125 to 148; sequence LVRKRKMRKKGRWPPSKMKKNKNV.

This sequence belongs to the chloroplast-specific ribosomal protein cL37 family. As to quaternary structure, part of the 50S ribosomal subunit.

It is found in the plastid. The protein resides in the chloroplast. This is Large ribosomal subunit protein cL37 (PSRP5) from Arabidopsis thaliana (Mouse-ear cress).